The primary structure comprises 514 residues: MGMKFMAAVAFLALQLIVMAAAEDQSAQIMLDSDIEQYLRSNRSLKKLVHSRHDAATVFNVEQYGAVGDGKHDSTEAFATTWNAACKKASAVLLVPANKKFFVNNLVFRGPCQPHLSFKVDGTIVAQPDPARWKNSKIWLQFAQLTDFNLMGTGVIDGQGQQWWAGQCKVVNGRTVCNDRNRPTAIKIDYSKSVTVKELTLMNSPEFHLVFGECEGVKIQGLKIKAPRDSPNTDGIDIFASKRFHIEKCVIGTGDDCIAIGTGSSNITIKDLICGPGHGISIGSLGRDNSRAEVSHVHVNRAKFIDTQNGLRIKTWQGGSGLASYITYENVEMINSENPILINQFYCTSASACQNQRSAVQIQGVTYKNIHGTSATAAAIQLMCSDSVPCTGIQLSNVSLKLTSGKPASCVDKNARGFYSGRLIPTCKNLRPGPSPKEFELQQQPTTVMDENKGACAKGDSTCISLSSSPPNCKNKCKGCQPCKPKLIIVHPNKPQDYYPQKWVCSCHNKIYNP.

A signal peptide spans 1-22 (MGMKFMAAVAFLALQLIVMAAA). Positions 23 to 50 (EDQSAQIMLDSDIEQYLRSNRSLKKLVH) are excised as a propeptide. PbH1 repeat units follow at residues 214-240 (CEGV…DIFA), 241-262 (SKRF…AIGT), 264-284 (SSNI…SIGS), 294-315 (VSHV…RIKT), 323-344 (ASYI…LINQ), and 357-384 (RSAV…QLMC). Asp-255 (proton donor) is an active-site residue. Asn-266 carries N-linked (GlcNAc...) asparagine glycosylation. His-278 is a catalytic residue. An N-linked (GlcNAc...) asparagine glycan is attached at Asn-397.

It belongs to the glycosyl hydrolase 28 family.

It localises to the secreted. The protein localises to the cell wall. It carries out the reaction (1,4-alpha-D-galacturonosyl)n+m + H2O = (1,4-alpha-D-galacturonosyl)n + (1,4-alpha-D-galacturonosyl)m.. This Chamaecyparis obtusa (Hinoki false-cypress) protein is Polygalacturonase.